Here is a 132-residue protein sequence, read N- to C-terminus: Evasin P985 (132 aa).

The N-terminal stretch at 1 to 24 (MHSTIAYVSLLPLALFVAMHGAST) is a signal peptide. 6 N-linked (GlcNAc...) asparagine glycosylation sites follow: Asn-45, Asn-69, Asn-74, Asn-103, Asn-111, and Asn-117. 4 cysteine pairs are disulfide-bonded: Cys-48–Cys-70, Cys-66–Cys-109, Cys-83–Cys-114, and Cys-104–Cys-123.

The protein resides in the secreted. Its function is as follows. Salivary chemokine-binding protein which binds to host chemokine CCL5. The sequence is that of Evasin P985 from Amblyomma parvum (South American tick).